The following is a 243-amino-acid chain: tRNA (guanine-N(1)-)-methyltransferase (243 aa).

S-adenosyl-L-methionine contacts are provided by residues Gly-113 and 133–138 (IGDFVL).

This sequence belongs to the RNA methyltransferase TrmD family. Homodimer.

The protein localises to the cytoplasm. It carries out the reaction guanosine(37) in tRNA + S-adenosyl-L-methionine = N(1)-methylguanosine(37) in tRNA + S-adenosyl-L-homocysteine + H(+). Specifically methylates guanosine-37 in various tRNAs. This chain is tRNA (guanine-N(1)-)-methyltransferase, found in Bacillus velezensis (strain DSM 23117 / BGSC 10A6 / LMG 26770 / FZB42) (Bacillus amyloliquefaciens subsp. plantarum).